A 329-amino-acid polypeptide reads, in one-letter code: MCHQWLVLSWFSLVLLASPLMAIWELEKDVYVVELDWYPDAPGEMVVLTCNTPEEEGITWTSAQSNEVLGSGKTLTIQVKEFGDAGWYTCHKGGEVLSHSHLLLHKKEDGIWSTDILKDQKESKNKTFLKCEAKNYSGRFTCWWLTAISTDLKFSVKSSRGSSDPRGVTCGAATLSAERVSVDDREYKKYTVECQEGSACPAAEESLPIEIVVDAVHKLKYENYTSGFFIRDIIKPDPPKNLQLKPLKNSRQVEVSWEYPETWSTPHSYFSLTFSIQVQGKNKKERKDRLFMDETSATVTCHKDGQIRVQARDRYYSSSWSEWASVSCS.

Positions 1 to 22 (MCHQWLVLSWFSLVLLASPLMA) are cleaved as a signal peptide. In terms of domain architecture, Ig-like C2-type spans 29–106 (DVYVVELDWY…LSHSHLLLHK (78 aa)). The cysteines at positions 50 and 90 are disulfide-linked. N-linked (GlcNAc...) asparagine glycans are attached at residues Asn125, Asn135, and Asn223. In terms of domain architecture, Fibronectin type-III spans 238–329 (PPKNLQLKPL…WSEWASVSCS (92 aa)).

The protein belongs to the IL-12B family. Heterodimer with IL12A; disulfide-linked. The heterodimer is known as interleukin IL-12. Heterodimer with IL23A; disulfide-linked. The heterodimer is known as interleukin IL-23. Also secreted as a monomer. Interacts with NBR1; this interaction promotes IL-12 secretion.

Its subcellular location is the secreted. Cytokine that can act as a growth factor for activated T and NK cells, enhance the lytic activity of NK/lymphokine-activated killer cells, and stimulate the production of IFN-gamma by resting PBMC. Functionally, associates with IL23A to form the IL-23 interleukin, a heterodimeric cytokine which functions in innate and adaptive immunity. IL-23 may constitute with IL-17 an acute response to infection in peripheral tissues. IL-23 binds to a heterodimeric receptor complex composed of IL12RB1 and IL23R, activates the Jak-Stat signaling cascade, stimulates memory rather than naive T-cells and promotes production of pro-inflammatory cytokines. IL-23 induces autoimmune inflammation and thus may be responsible for autoimmune inflammatory diseases and may be important for tumorigenesis. The chain is Interleukin-12 subunit beta (IL12B) from Equus caballus (Horse).